Consider the following 622-residue polypeptide: 1-deoxy-D-xylulose-5-phosphate synthase (622 aa).

Residues histidine 80 and 121 to 123 (GHS) contribute to the thiamine diphosphate site. Aspartate 152 provides a ligand contact to Mg(2+). Thiamine diphosphate-binding positions include 153–154 (GA), asparagine 181, tyrosine 288, and glutamate 370. Residue asparagine 181 participates in Mg(2+) binding.

The protein belongs to the transketolase family. DXPS subfamily. As to quaternary structure, homodimer. The cofactor is Mg(2+). Thiamine diphosphate serves as cofactor.

It catalyses the reaction D-glyceraldehyde 3-phosphate + pyruvate + H(+) = 1-deoxy-D-xylulose 5-phosphate + CO2. It functions in the pathway metabolic intermediate biosynthesis; 1-deoxy-D-xylulose 5-phosphate biosynthesis; 1-deoxy-D-xylulose 5-phosphate from D-glyceraldehyde 3-phosphate and pyruvate: step 1/1. Its function is as follows. Catalyzes the acyloin condensation reaction between C atoms 2 and 3 of pyruvate and glyceraldehyde 3-phosphate to yield 1-deoxy-D-xylulose-5-phosphate (DXP). This is 1-deoxy-D-xylulose-5-phosphate synthase from Shewanella baltica (strain OS195).